Here is a 424-residue protein sequence, read N- to C-terminus: DUF21 domain-containing protein At4g33700 (424 aa).

The Extracellular portion of the chain corresponds to 1-11 (MAVEYVCCSPN). The CNNM transmembrane domain maps to 8–191 (CSPNFFIHIA…GKGGELTHDE (184 aa)). Residues 12 to 32 (FFIHIAVIVFLVLFAGLMSGL) form a helical membrane-spanning segment. Topologically, residues 33–70 (TLGLMSLSLVDLEVLAKSGTPEHRKYAAKILPVVKNQH) are cytoplasmic. A helical membrane pass occupies residues 71-91 (LLLVTLLICNAAAMETLPIFL). Topologically, residues 92–94 (DGL) are extracellular. The helical transmembrane segment at 95 to 115 (VTAWGAILISVTLILLFGEII) threads the bilayer. Residues 116-136 (PQSICSRYGLAIGATVAPFVR) lie on the Cytoplasmic side of the membrane. A helical membrane pass occupies residues 137 to 157 (VLVFICLPVAWPISKLLDFLL). Topologically, residues 158 to 424 (GHRRAALFRR…DETDHHFEDS (267 aa)) are extracellular. Positions 210 to 271 (MTPISDIFVI…TINPDEEIPV (62 aa)) constitute a CBS 1 domain. Asn273 and Asn319 each carry an N-linked (GlcNAc...) asparagine glycan. 2 CBS domains span residues 275-331 (TIRR…DVDS) and 355-416 (PNRA…IFDE). Disordered stretches follow at residues 321–340 (SVKE…PQER) and 355–374 (PNRA…SKDN). Position 331 is a phosphoserine (Ser331).

Its subcellular location is the membrane. In Arabidopsis thaliana (Mouse-ear cress), this protein is DUF21 domain-containing protein At4g33700 (CBSDUF6).